The following is a 203-amino-acid chain: Thymidine kinase (203 aa).

Residues 9–16 (ATMNAGKT) and 87–90 (DEAQ) each bind ATP. Catalysis depends on glutamate 88, which acts as the Proton acceptor. 4 residues coordinate Zn(2+): cysteine 145, cysteine 147, cysteine 181, and histidine 184.

Belongs to the thymidine kinase family. Homotetramer.

It localises to the cytoplasm. It catalyses the reaction thymidine + ATP = dTMP + ADP + H(+). This chain is Thymidine kinase, found in Mesorhizobium japonicum (strain LMG 29417 / CECT 9101 / MAFF 303099) (Mesorhizobium loti (strain MAFF 303099)).